A 375-amino-acid polypeptide reads, in one-letter code: Prophage integrase IntE (375 aa).

In terms of domain architecture, Core-binding (CB) spans 82–167 (ITTSTWLDRY…VLIDVFKEAQ (86 aa)). Residues 189–375 (ITRQRLSLEE…RGKGWSKVAL (187 aa)) form the Tyr recombinase domain. Active-site residues include Arg226, Lys249, His330, Arg333, and His353. The tract at residues 350–375 (LLGHKTQQQTDRYHDDRGKGWSKVAL) is disordered. Tyr362 acts as the O-(3'-phospho-DNA)-tyrosine intermediate in catalysis.

Belongs to the 'phage' integrase family.

Functionally, integrase from the cryptic lambdoid prophage e14. Integrase is necessary for integration of the phage into the host genome by site-specific recombination. In conjunction with excisionase, integrase is also necessary for excision of the prophage from the host genome. The polypeptide is Prophage integrase IntE (intE) (Escherichia coli (strain K12)).